The following is a 98-amino-acid chain: NADH-ubiquinone oxidoreductase chain 4L (98 aa).

Transmembrane regions (helical) follow at residues 1–21, 29–49, and 61–81; these read MSMV…GLLM, SLLC…MTIL, and IILL…LVMV.

It belongs to the complex I subunit 4L family. In terms of assembly, core subunit of respiratory chain NADH dehydrogenase (Complex I) which is composed of 45 different subunits.

It localises to the mitochondrion inner membrane. The catalysed reaction is a ubiquinone + NADH + 5 H(+)(in) = a ubiquinol + NAD(+) + 4 H(+)(out). Core subunit of the mitochondrial membrane respiratory chain NADH dehydrogenase (Complex I) which catalyzes electron transfer from NADH through the respiratory chain, using ubiquinone as an electron acceptor. Part of the enzyme membrane arm which is embedded in the lipid bilayer and involved in proton translocation. The chain is NADH-ubiquinone oxidoreductase chain 4L (MT-ND4L) from Arctocephalus australis (South American fur seal).